The sequence spans 336 residues: Biotin synthase (336 aa).

Positions 52–279 (KAIQLSTLMS…KSYVRLSAGR (228 aa)) constitute a Radical SAM core domain. The [4Fe-4S] cluster site is built by Cys-67, Cys-71, and Cys-74. The [2Fe-2S] cluster site is built by Cys-111, Cys-142, Cys-202, and Arg-274.

It belongs to the radical SAM superfamily. Biotin synthase family. In terms of assembly, homodimer. The cofactor is [4Fe-4S] cluster. It depends on [2Fe-2S] cluster as a cofactor.

It catalyses the reaction (4R,5S)-dethiobiotin + (sulfur carrier)-SH + 2 reduced [2Fe-2S]-[ferredoxin] + 2 S-adenosyl-L-methionine = (sulfur carrier)-H + biotin + 2 5'-deoxyadenosine + 2 L-methionine + 2 oxidized [2Fe-2S]-[ferredoxin]. The protein operates within cofactor biosynthesis; biotin biosynthesis; biotin from 7,8-diaminononanoate: step 2/2. Its function is as follows. Catalyzes the conversion of dethiobiotin (DTB) to biotin by the insertion of a sulfur atom into dethiobiotin via a radical-based mechanism. The chain is Biotin synthase from Pasteurella multocida (strain Pm70).